The following is a 584-amino-acid chain: Aspartate--tRNA(Asp/Asn) ligase (584 aa).

Residue Glu173 participates in L-aspartate binding. The interval 197 to 200 (QLFK) is aspartate. Arg219 is a binding site for L-aspartate. ATP is bound by residues 219-221 (RDE) and Gln228. An L-aspartate-binding site is contributed by His447. ATP is bound at residue Glu477. Arg484 provides a ligand contact to L-aspartate. Position 529 to 532 (529 to 532 (GFDR)) interacts with ATP.

The protein belongs to the class-II aminoacyl-tRNA synthetase family. Type 1 subfamily. As to quaternary structure, homodimer.

The protein localises to the cytoplasm. It catalyses the reaction tRNA(Asx) + L-aspartate + ATP = L-aspartyl-tRNA(Asx) + AMP + diphosphate. In terms of biological role, aspartyl-tRNA synthetase with relaxed tRNA specificity since it is able to aspartylate not only its cognate tRNA(Asp) but also tRNA(Asn). Reaction proceeds in two steps: L-aspartate is first activated by ATP to form Asp-AMP and then transferred to the acceptor end of tRNA(Asp/Asn). The polypeptide is Aspartate--tRNA(Asp/Asn) ligase (Campylobacter hominis (strain ATCC BAA-381 / DSM 21671 / CCUG 45161 / LMG 19568 / NCTC 13146 / CH001A)).